Here is a 258-residue protein sequence, read N- to C-terminus: 5-oxoprolinase subunit A (258 aa).

The protein belongs to the LamB/PxpA family. As to quaternary structure, forms a complex composed of PxpA, PxpB and PxpC.

It carries out the reaction 5-oxo-L-proline + ATP + 2 H2O = L-glutamate + ADP + phosphate + H(+). Catalyzes the cleavage of 5-oxoproline to form L-glutamate coupled to the hydrolysis of ATP to ADP and inorganic phosphate. The polypeptide is 5-oxoprolinase subunit A (Corynebacterium jeikeium (strain K411)).